Here is a 406-residue protein sequence, read N- to C-terminus: DNA primase large subunit PriL (406 aa).

Residues C302, C375, C384, and C389 each contribute to the [4Fe-4S] cluster site.

The protein belongs to the eukaryotic-type primase large subunit family. In terms of assembly, heterodimer of a small subunit (PriS) and a large subunit (PriL). The cofactor is [4Fe-4S] cluster.

Its function is as follows. Regulatory subunit of DNA primase, an RNA polymerase that catalyzes the synthesis of short RNA molecules used as primers for DNA polymerase during DNA replication. Stabilizes and modulates the activity of the small subunit, increasing the rate of DNA synthesis, and conferring RNA synthesis capability. The DNA polymerase activity may enable DNA primase to also catalyze primer extension after primer synthesis. May also play a role in DNA repair. The sequence is that of DNA primase large subunit PriL from Methanopyrus kandleri (strain AV19 / DSM 6324 / JCM 9639 / NBRC 100938).